The following is an 83-amino-acid chain: Small ribosomal subunit protein bS20 (83 aa).

Belongs to the bacterial ribosomal protein bS20 family.

Functionally, binds directly to 16S ribosomal RNA. This is Small ribosomal subunit protein bS20 from Staphylococcus carnosus (strain TM300).